The following is a 382-amino-acid chain: Pyrimidine monooxygenase RutA (382 aa).

Residues 68-69 (IK), Asn134, Glu143, 159-160 (RY), and Ser209 each bind FMN.

Belongs to the NtaA/SnaA/DszA monooxygenase family. RutA subfamily.

The enzyme catalyses uracil + FMNH2 + NADH + O2 = (Z)-3-ureidoacrylate + FMN + NAD(+) + H2O + H(+). It carries out the reaction thymine + FMNH2 + NADH + O2 = (Z)-2-methylureidoacrylate + FMN + NAD(+) + H2O + H(+). In terms of biological role, catalyzes the pyrimidine ring opening between N-3 and C-4 by an unusual flavin hydroperoxide-catalyzed mechanism, adding oxygen atoms in the process to yield ureidoacrylate peracid, that immediately reacts with FMN forming ureidoacrylate and FMN-N(5)-oxide. The FMN-N(5)-oxide reacts spontaneously with NADH to produce FMN. Requires the flavin reductase RutF to regenerate FMN in vivo. The polypeptide is Pyrimidine monooxygenase RutA (Escherichia coli O150:H5 (strain SE15)).